Here is a 161-residue protein sequence, read N- to C-terminus: Cyclic pyranopterin monophosphate synthase (161 aa).

Residues 73-75 (LCH) and 110-111 (ME) each bind substrate. D125 is a catalytic residue.

It belongs to the MoaC family. In terms of assembly, homohexamer; trimer of dimers.

The enzyme catalyses (8S)-3',8-cyclo-7,8-dihydroguanosine 5'-triphosphate = cyclic pyranopterin phosphate + diphosphate. Its pathway is cofactor biosynthesis; molybdopterin biosynthesis. Catalyzes the conversion of (8S)-3',8-cyclo-7,8-dihydroguanosine 5'-triphosphate to cyclic pyranopterin monophosphate (cPMP). This chain is Cyclic pyranopterin monophosphate synthase, found in Pseudomonas syringae pv. syringae (strain B728a).